A 463-amino-acid polypeptide reads, in one-letter code: MGSKTPDGHRQGPNESSTGGTIAVLNPPKSASASGLVQDASGEDDEDGDDDEEKAGTDLNSRAQPNNDGKKRKRKNNKKKKKKRPLSGQQTTPPRVALSSIFSGQRYPEGEIVKYVTNDDNLQRTTAEELRHLSVVNNMDDTFLSDYRQAAEVHRQVRRYVQTIAKPGISMSELAQEIEDGVRALTGHQGIETGDALKAGLAFPTGLCLNNVAAHWTPNPGTKEVILGHDDVLKIDFGVHVHGRIVDSAFTVAFNPVYDNLLTAVRAATNTGLKEAGIDARIDHISGEIQEVMESYEVEINGNLIPVKALRSLSGHNILRYKIHGEKQVPFVKSKTTQRMEEGDVFAIETFGSTGKGYTRDEAGVYGYGLNEHVSATGLRHASAKSLLKTIRENFGTLVFSRRYLEHMGVKNYHLGMRSLISNDIVECYAPLVDVPGSYVAQFEHTVLLRPNCKEVISRGDDY.

Residues M1 to G12 are compositionally biased toward basic and acidic residues. The tract at residues M1–V96 is disordered. Acidic residues predominate over residues S41–E53. Residues D58–N67 are compositionally biased toward polar residues. A compositionally biased stretch (basic residues) spans K70–P85. H215 is a substrate binding site. A divalent metal cation is bound by residues D236, D247, and H316. H324 contacts substrate. The a divalent metal cation site is built by E349 and E444.

It belongs to the peptidase M24A family. Methionine aminopeptidase eukaryotic type 2 subfamily. The cofactor is Co(2+). It depends on Zn(2+) as a cofactor. Requires Mn(2+) as cofactor. Fe(2+) serves as cofactor.

Its subcellular location is the cytoplasm. It carries out the reaction Release of N-terminal amino acids, preferentially methionine, from peptides and arylamides.. Its function is as follows. Cotranslationally removes the N-terminal methionine from nascent proteins. The N-terminal methionine is often cleaved when the second residue in the primary sequence is small and uncharged (Met-Ala-, Cys, Gly, Pro, Ser, Thr, or Val). This chain is Methionine aminopeptidase 2-1, found in Arthroderma otae (strain ATCC MYA-4605 / CBS 113480) (Microsporum canis).